Reading from the N-terminus, the 416-residue chain is Solute carrier family 35 member D3 (416 aa).

10 consecutive transmembrane segments (helical) span residues 9-29 (VLGI…NILL), 38-58 (FSFL…SLEL), 64-84 (LIAV…VAVL), 103-123 (MYVV…VLVL), 131-151 (GVLA…AGDL), 155-175 (PIGY…LVLI), 187-207 (LTAQ…CSFA), 224-244 (AMVC…FTTL), 257-277 (FVGV…FSDV), and 280-300 (TSLF…YCVA). The tract at residues 334–384 (MEELPGEGGNGRSEGGEAAGGPAQESRQEVRGSPRGVPLVAGSSEEGSRRS) is disordered. Residues 339 to 352 (GEGGNGRSEGGEAA) are compositionally biased toward gly residues.

It belongs to the TPT transporter family. SLC35D subfamily. As to quaternary structure, could interact with ATG14, BECN1 and PIK3C3 that form the PI3KC3-C1/AIC/autophagy initiation complex; enhancing the formation of the AIC and promoting autophagy.

It is found in the cytoplasmic vesicle. Its subcellular location is the secretory vesicle. The protein localises to the synaptic vesicle membrane. It localises to the early endosome membrane. The protein resides in the endoplasmic reticulum membrane. The catalysed reaction is UDP-alpha-D-glucose(in) = UDP-alpha-D-glucose(out). Inhibited by proton uncouplers that directly abolish the proton electrochemical gradient. Probable UDP-glucose transmembrane transporter involved in UDP-glucose transport from the cytosol to the lumen of synaptic vesicles. It is involved in platelet dense granules maturation. Functionally, alternatively, could function as a molecular adapter enhancing the formation of the PI3KC3-C1/AIC/autophagy initiation complex to promote autophagy in dopaminergic neurons. Could also regulate the plasma membrane localization of the D(1A) dopamine receptor/DRD1 and dopamine signaling. The chain is Solute carrier family 35 member D3 from Homo sapiens (Human).